Reading from the N-terminus, the 568-residue chain is Alpha-1,3-galactosidase A (568 aa).

The N-terminal stretch at 1–17 (MMSVWFIQLAIFAQSRI) is a signal peptide. PbH1 repeat units follow at residues 87–125 (LYLN…VLKN), 243–265 (SKGI…VCQY), 299–321 (RGMI…NIHG), 409–431 (TPEV…LITT), 432–454 (RRKS…FVAD), and 465–486 (VHDL…ISID).

Belongs to the glycosyl hydrolase 110 family. A subfamily.

It carries out the reaction Hydrolysis of terminal, non-reducing branched (1-&gt;3)-alpha-D-galactosidic residues, producing free D-galactose.. It catalyses the reaction Hydrolysis of terminal, non-reducing alpha-D-galactose residues in alpha-D-galactosides, including galactose oligosaccharides, galactomannans and galactolipids.. Its function is as follows. Alpha-galactosidase that specifically removes branched alpha-1,3-linked galactose residues present in blood group B antigens. Has no activity toward linear alpha-1,3-linked galactose residues. The chain is Alpha-1,3-galactosidase A (glaA) from Bacteroides thetaiotaomicron (strain ATCC 29148 / DSM 2079 / JCM 5827 / CCUG 10774 / NCTC 10582 / VPI-5482 / E50).